A 90-amino-acid chain; its full sequence is Small ribosomal subunit protein uS15c (90 aa).

In terms of assembly, component of the chloroplast small ribosomal subunit (SSU). Mature 70S chloroplast ribosomes of higher plants consist of a small (30S) and a large (50S) subunit. The 30S small subunit contains 1 molecule of ribosomal RNA (16S rRNA) and 24 different proteins. The 50S large subunit contains 3 rRNA molecules (23S, 5S and 4.5S rRNA) and 33 different proteins.

The protein resides in the plastid. The protein localises to the chloroplast. Component of the chloroplast ribosome (chloro-ribosome), a dedicated translation machinery responsible for the synthesis of chloroplast genome-encoded proteins, including proteins of the transcription and translation machinery and components of the photosynthetic apparatus. This chain is Small ribosomal subunit protein uS15c (rps15), found in Spinacia oleracea (Spinach).